A 107-amino-acid chain; its full sequence is METLDKIKKQISENPILIYMKGSPKLPSCGFPARASEALMHCKVPFGYVDILQHPDIRAELPTYANWPTFPQLWVEGELIGGCDIILEMYQAGELQTLLAEVAAKHA.

The region spanning 4 to 106 (LDKIKKQISE…TLLAEVAAKH (103 aa)) is the Glutaredoxin domain. Lys-21 contacts glutathione. Residue Cys-29 participates in [2Fe-2S] cluster binding. Glutathione-binding positions include Arg-58, Phe-70, and 83–84 (CD).

It belongs to the glutaredoxin family. Monothiol subfamily. Homodimer.

It is found in the cytoplasm. Its function is as follows. Monothiol glutaredoxin involved in the biogenesis of iron-sulfur clusters. This Haemophilus influenzae (strain ATCC 51907 / DSM 11121 / KW20 / Rd) protein is Glutaredoxin 4 (grxD).